The primary structure comprises 130 residues: Fluoride-specific ion channel FluC (130 aa).

A run of 4 helical transmembrane segments spans residues 3 to 23 (LVFL…YFVG), 38 to 58 (LGTF…GHLA), 67 to 87 (FGIF…SYGL), and 102 to 122 (ISYV…GWFL). Na(+)-binding residues include Gly77 and Thr80.

The protein belongs to the fluoride channel Fluc/FEX (TC 1.A.43) family.

The protein resides in the cell inner membrane. It carries out the reaction fluoride(in) = fluoride(out). Na(+) is not transported, but it plays an essential structural role and its presence is essential for fluoride channel function. Functionally, fluoride-specific ion channel. Important for reducing fluoride concentration in the cell, thus reducing its toxicity. The polypeptide is Fluoride-specific ion channel FluC (Helicobacter pylori (strain J99 / ATCC 700824) (Campylobacter pylori J99)).